The following is a 101-amino-acid chain: Small ribosomal subunit protein uS14 (101 aa).

Over residues 1 to 10 (MAKNSMVERD) the composition is skewed to basic and acidic residues. The interval 1–20 (MAKNSMVERDRKRRKLAQKY) is disordered.

The protein belongs to the universal ribosomal protein uS14 family. In terms of assembly, part of the 30S ribosomal subunit. Contacts proteins S3 and S10.

In terms of biological role, binds 16S rRNA, required for the assembly of 30S particles and may also be responsible for determining the conformation of the 16S rRNA at the A site. The protein is Small ribosomal subunit protein uS14 of Halorhodospira halophila (strain DSM 244 / SL1) (Ectothiorhodospira halophila (strain DSM 244 / SL1)).